A 782-amino-acid polypeptide reads, in one-letter code: Phosphoribosylformylglycinamidine synthase subunit PurL (782 aa).

H50 is an active-site residue. Y53 and K92 together coordinate ATP. E94 serves as a coordination point for Mg(2+). Substrate-binding positions include 95–98 and R117; that span reads SHNH. Residue H96 is the Proton acceptor of the active site. D118 contributes to the Mg(2+) binding site. Substrate is bound at residue Q241. Position 269 (D269) interacts with Mg(2+). Residue 313–315 coordinates substrate; the sequence is ESQ. The ATP site is built by D520 and G557. N558 is a binding site for Mg(2+). S560 serves as a coordination point for substrate.

It belongs to the FGAMS family. Monomer. Part of the FGAM synthase complex composed of 1 PurL, 1 PurQ and 2 PurS subunits.

Its subcellular location is the cytoplasm. It catalyses the reaction N(2)-formyl-N(1)-(5-phospho-beta-D-ribosyl)glycinamide + L-glutamine + ATP + H2O = 2-formamido-N(1)-(5-O-phospho-beta-D-ribosyl)acetamidine + L-glutamate + ADP + phosphate + H(+). The protein operates within purine metabolism; IMP biosynthesis via de novo pathway; 5-amino-1-(5-phospho-D-ribosyl)imidazole from N(2)-formyl-N(1)-(5-phospho-D-ribosyl)glycinamide: step 1/2. Functionally, part of the phosphoribosylformylglycinamidine synthase complex involved in the purines biosynthetic pathway. Catalyzes the ATP-dependent conversion of formylglycinamide ribonucleotide (FGAR) and glutamine to yield formylglycinamidine ribonucleotide (FGAM) and glutamate. The FGAM synthase complex is composed of three subunits. PurQ produces an ammonia molecule by converting glutamine to glutamate. PurL transfers the ammonia molecule to FGAR to form FGAM in an ATP-dependent manner. PurS interacts with PurQ and PurL and is thought to assist in the transfer of the ammonia molecule from PurQ to PurL. This chain is Phosphoribosylformylglycinamidine synthase subunit PurL, found in Cyanothece sp. (strain PCC 7425 / ATCC 29141).